The primary structure comprises 381 residues: 2-methylcitrate synthase 1 (381 aa).

Substrate is bound at residue His-192. His-227 is an active-site residue. Residue 260–264 (RIMGF) participates in CoA binding. His-266 is a catalytic residue. Arg-275 serves as a coordination point for substrate. Residue Asp-317 is part of the active site. The substrate site is built by Arg-342 and Arg-361.

This sequence belongs to the citrate synthase family. Homodimer.

The enzyme catalyses propanoyl-CoA + oxaloacetate + H2O = (2S,3S)-2-methylcitrate + CoA + H(+). It carries out the reaction oxaloacetate + acetyl-CoA + H2O = citrate + CoA + H(+). Its pathway is carbohydrate metabolism; tricarboxylic acid cycle. In terms of biological role, catalyzes the Claisen condensation of propionyl-CoA and oxaloacetate (OAA) to yield 2-methylcitrate (2-MC) and CoA. Also catalyzes the condensation of oxaloacetate with propionyl-CoA but with a lower specificity. The chain is 2-methylcitrate synthase 1 (prpC1) from Corynebacterium glutamicum (strain ATCC 13032 / DSM 20300 / JCM 1318 / BCRC 11384 / CCUG 27702 / LMG 3730 / NBRC 12168 / NCIMB 10025 / NRRL B-2784 / 534).